We begin with the raw amino-acid sequence, 664 residues long: Lamin tail domain-containing protein 2 (664 aa).

The tract at residues 1 to 40 is disordered; the sequence is MAPKSCQESEDKQVSPAPAGVQPDSSDLGSPVGTPVDRVA. Positions 118-169 form a coiled coil; that stretch reads QDKFLRNQVQKLTLELKAQKEQAQQEKQQLEEKLQQNLWAKQQLEAELQTFQ. Residues 245-260 are compositionally biased toward polar residues; sequence SDQKQSQPPTSETYTL. Disordered stretches follow at residues 245–272 and 286–329; these read SDQK…TEKP and TSSS…MQEH. Residues 286-298 show a composition bias toward low complexity; the sequence is TSSSERTQSDTSS. Over residues 312–325 the composition is skewed to polar residues; sequence GHPSQGTNLASSEQ. The region spanning 362–481 is the LTD domain; it reads PYTRPQLNPF…QVLSEHQATP (120 aa). The segment at 504 to 563 is disordered; sequence SESEPDVHPGEQQCRPSSPQKGRAKDAGARRKKPGPGVRQHRHSSTSGLRASRTLHPTET. Residues 533-547 are compositionally biased toward basic residues; the sequence is RRKKPGPGVRQHRHS.

This Mus musculus (Mouse) protein is Lamin tail domain-containing protein 2 (Lmntd2).